Consider the following 251-residue polypeptide: Phosphate import ATP-binding protein PstB (251 aa).

The ABC transporter domain maps to 5–246 (IKIRGVNFFY…PRDKRTEDYI (242 aa)). Residue 37–44 (GPSGCGKS) coordinates ATP.

Belongs to the ABC transporter superfamily. Phosphate importer (TC 3.A.1.7) family. In terms of assembly, the complex is composed of two ATP-binding proteins (PstB), two transmembrane proteins (PstC and PstA) and a solute-binding protein (PstS).

It is found in the cell membrane. It catalyses the reaction phosphate(out) + ATP + H2O = ADP + 2 phosphate(in) + H(+). Functionally, part of the ABC transporter complex PstSACB involved in phosphate import. Responsible for energy coupling to the transport system. This chain is Phosphate import ATP-binding protein PstB, found in Dehalococcoides mccartyi (strain CBDB1).